Consider the following 246-residue polypeptide: ABC transporter ATP-binding protein NatA (246 aa).

The ABC transporter domain maps to 2 to 237; sequence ITLTDCSRRF…ERSEDLNYIF (236 aa). 38-45 is an ATP binding site; sequence GENGAGKT.

The protein belongs to the ABC transporter superfamily. The complex is composed of NatA and NatB.

It catalyses the reaction Na(+)(in) + ATP + H2O = Na(+)(out) + ADP + phosphate + H(+). Functionally, part of an ABC transporter that catalyzes ATP-dependent electrogenic sodium extrusion. In Bacillus subtilis (strain 168), this protein is ABC transporter ATP-binding protein NatA.